Reading from the N-terminus, the 127-residue chain is MSKKYGGQISFDPPARLEKDQVVAKVVQLKGSALFMVVENNGQELLVEMPPKYRNKIWVRRNGFVIVDKSEFLEKDNKIDGTILYVVQSPLKNWKKQIYWPKEFADESLNQNDSEESSSSEEEYDSD.

The region spanning 10–86 (SFDPPARLEK…NKIDGTILYV (77 aa)) is the S1-like domain. Positions 107 to 127 (ESLNQNDSEESSSSEEEYDSD) are disordered. Residues 113-127 (DSEESSSSEEEYDSD) show a composition bias toward acidic residues. Tyr124 bears the Phosphotyrosine mark. Ser126 carries the post-translational modification Phosphoserine.

This sequence belongs to the EIF1AD family.

It is found in the cytoplasm. The protein localises to the nucleus. The chain is S1-like domain-containing protein C146.08c from Schizosaccharomyces pombe (strain 972 / ATCC 24843) (Fission yeast).